The following is a 503-amino-acid chain: MAKLIMVQGTSSNVGKSILVTALCRIFKQDGYKVAPYKSQNMALNAFVTKEGGEIGRAQAVQAEACGIEPSVDMNPILLKPEADSRSQIIVNGKVDRTISAREYYEYAPLLLDTALAALNRLREKNDIVVIEGAGSPAEINLKQREIVNMRIAKEASAPVLLAGDIDRGGVFASLIGTIDLLEPDERYYIKGYLINKFRGDASLLKPAIDVLEDRTSIPVLGIIPYLRNMAIAQEDSVYLDECKGSLGETDLDIAVIRLPRISNYDDFDALATDGASVRFVSKTAEIGNPDLIIIPGTKSTIPDMEYLEQSGLAETIIKKARKGTHVLGVCGGYQILGKMIYDPHKTESETTELKGLGLLDTETTFEKEKATTQISGQVKFDSGLLSGLAGCAVSGYEIHMGRTRLFSAQPAFHITKTPKGPADYLDGASNAEGTVLGTYIHGIFENAAFRRGFLNAIRRHKGIPERQADYFDRDKEYDKLADIVRASIDMEKIYAILNEGIR.

The region spanning 251 to 450 is the GATase cobBQ-type domain; it reads DLDIAVIRLP…IHGIFENAAF (200 aa). Catalysis depends on Cys331, which acts as the Nucleophile. His442 is an active-site residue.

This sequence belongs to the CobB/CobQ family. CobQ subfamily.

Its pathway is cofactor biosynthesis; adenosylcobalamin biosynthesis. Catalyzes amidations at positions B, D, E, and G on adenosylcobyrinic A,C-diamide. NH(2) groups are provided by glutamine, and one molecule of ATP is hydrogenolyzed for each amidation. In Dehalococcoides mccartyi (strain CBDB1), this protein is Cobyric acid synthase.